The sequence spans 382 residues: Cytoplasmic tRNA 2-thiolation protein 2 (382 aa).

The protein belongs to the CTU2/NCS2 family.

The protein localises to the cytoplasm. Its pathway is tRNA modification; 5-methoxycarbonylmethyl-2-thiouridine-tRNA biosynthesis. Plays a central role in 2-thiolation of mcm(5)S(2)U at tRNA wobble positions of tRNA(Lys), tRNA(Glu) and tRNA(Gln). May act by forming a heterodimer with NCS6 that ligates sulfur from thiocarboxylated URM1 onto the uridine of tRNAs at wobble position. Prior mcm(5) tRNA modification by the elongator complex is required for 2-thiolation. May also be involved in protein urmylation. This chain is Cytoplasmic tRNA 2-thiolation protein 2, found in Phaeosphaeria nodorum (strain SN15 / ATCC MYA-4574 / FGSC 10173) (Glume blotch fungus).